The primary structure comprises 312 residues: Methionyl-tRNA formyltransferase (312 aa).

109–112 contacts (6S)-5,6,7,8-tetrahydrofolate; the sequence is SLLP.

This sequence belongs to the Fmt family.

It carries out the reaction L-methionyl-tRNA(fMet) + (6R)-10-formyltetrahydrofolate = N-formyl-L-methionyl-tRNA(fMet) + (6S)-5,6,7,8-tetrahydrofolate + H(+). Functionally, attaches a formyl group to the free amino group of methionyl-tRNA(fMet). The formyl group appears to play a dual role in the initiator identity of N-formylmethionyl-tRNA by promoting its recognition by IF2 and preventing the misappropriation of this tRNA by the elongation apparatus. The polypeptide is Methionyl-tRNA formyltransferase (Geotalea daltonii (strain DSM 22248 / JCM 15807 / FRC-32) (Geobacter daltonii)).